Here is an 87-residue protein sequence, read N- to C-terminus: Mu-conotoxin cal12b (87 aa).

Residues 1–19 (MKLTCVLVVLLLLLPYGDL) form the signal peptide. The propeptide occupies 20–42 (ITNNYIRGAARKVTPWRRNLKTR). 4 disulfides stabilise this stretch: Cys45/Cys58, Cys53/Cys70, Cys60/Cys75, and Cys69/Cys81. 6'-bromotryptophan is present on Trp59. At Pro65 the chain carries 4-hydroxyproline. 6'-bromotryptophan is present on residues Trp79 and Trp80. 4-hydroxyproline is present on Pro82. A 6'-bromotryptophan modification is found at Trp86.

In terms of tissue distribution, expressed by the venom duct.

Its subcellular location is the secreted. Its function is as follows. Mu-conotoxins block voltage-gated sodium channels. This toxin reversibly blocks voltage-gated sodium channel in cephalopods (tested on squid giant-fiber-lobe neurons) with an inhibitor constant (Ki) of 15 nmol/l, with no alteration in the voltage dependence of sodium conductance or on the kinetics of inactivation. Has no effect on sodium channels of the two gastropod S.luhuanus and A.californica (which are not natural prey). The polypeptide is Mu-conotoxin cal12b (Californiconus californicus (California cone)).